The primary structure comprises 205 residues: MIGKLKGTIDEIGDDHVLVDVHGVCYVAHCSSRTLARLGSPGEAIVLFIETYVREDQLKLFGFMSALEREWFNLLQSVQGVGAKVALAILATLTPSELANAIALQDKPAIARAPGVGPKVALRLVTELKNKAPAFTGDAGSAIGLKQELGEGVASAPVSDAVSALTNLGYSRDQAANAIAAALKNGGEGADSAKLIRLGLKELSR.

Residues 1–64 (MIGKLKGTID…EDQLKLFGFM (64 aa)) form a domain I region. Positions 65–143 (SALEREWFNL…AFTGDAGSAI (79 aa)) are domain II. The interval 144–153 (GLKQELGEGV) is flexible linker. The domain III stretch occupies residues 153 to 205 (VASAPVSDAVSALTNLGYSRDQAANAIAAALKNGGEGADSAKLIRLGLKELSR).

This sequence belongs to the RuvA family. Homotetramer. Forms an RuvA(8)-RuvB(12)-Holliday junction (HJ) complex. HJ DNA is sandwiched between 2 RuvA tetramers; dsDNA enters through RuvA and exits via RuvB. An RuvB hexamer assembles on each DNA strand where it exits the tetramer. Each RuvB hexamer is contacted by two RuvA subunits (via domain III) on 2 adjacent RuvB subunits; this complex drives branch migration. In the full resolvosome a probable DNA-RuvA(4)-RuvB(12)-RuvC(2) complex forms which resolves the HJ.

It localises to the cytoplasm. In terms of biological role, the RuvA-RuvB-RuvC complex processes Holliday junction (HJ) DNA during genetic recombination and DNA repair, while the RuvA-RuvB complex plays an important role in the rescue of blocked DNA replication forks via replication fork reversal (RFR). RuvA specifically binds to HJ cruciform DNA, conferring on it an open structure. The RuvB hexamer acts as an ATP-dependent pump, pulling dsDNA into and through the RuvAB complex. HJ branch migration allows RuvC to scan DNA until it finds its consensus sequence, where it cleaves and resolves the cruciform DNA. The chain is Holliday junction branch migration complex subunit RuvA from Allorhizobium ampelinum (strain ATCC BAA-846 / DSM 112012 / S4) (Agrobacterium vitis (strain S4)).